A 418-amino-acid chain; its full sequence is Triacylglycerol lipase 2 (418 aa).

A signal peptide spans 1 to 31 (MAGSVMVPSVSIGLALSVLIFFALSLKTLEA). N-linked (GlcNAc...) asparagine glycosylation is present at asparagine 158. Residue serine 190 is the Nucleophile of the active site. Residues asparagine 286 and asparagine 342 are each glycosylated (N-linked (GlcNAc...) asparagine). Active-site charge relay system residues include aspartate 360 and histidine 393.

This sequence belongs to the AB hydrolase superfamily. Lipase family.

It is found in the secreted. The enzyme catalyses a triacylglycerol + H2O = a diacylglycerol + a fatty acid + H(+). Functionally, triacylglycerol (TAG) lipase. May be involved for TAG storage breakdown during seed germination. In Arabidopsis thaliana (Mouse-ear cress), this protein is Triacylglycerol lipase 2 (LIP2).